We begin with the raw amino-acid sequence, 56 residues long: Metallothionein (56 aa).

Zn(2+) contacts are provided by C9, C11, C14, C16, C32, C36, H40, C47, H49, C52, and C54.

The protein belongs to the metallothionein superfamily. Type 14 family.

In terms of biological role, may play a role in essential metal ion homeostasis (especially zinc homeostasis) and resistance to certain non-essential metal ions. Binds four zinc ions. The protein is Metallothionein (smtA) of Synechococcus elongatus (strain ATCC 33912 / PCC 7942 / FACHB-805) (Anacystis nidulans R2).